The primary structure comprises 218 residues: Copper acquisition factor BIM1 (218 aa).

A signal peptide spans 1–19 (MFALKFILITSFIASTALA). His20 and His65 together coordinate Cu(2+). Disulfide bonds link Cys40–Cys144 and Cys110–Cys161. N-linked (GlcNAc...) asparagine glycans are attached at residues Asn87, Asn91, and Asn124. Asp138 is a Cu(2+) binding site. N-linked (GlcNAc...) asparagine glycans are attached at residues Asn158 and Asn170. The tract at residues 160 to 194 (TCTDDASRTSNASSTSSGSATATSAAATSSSSGTS) is disordered. The span at 167 to 194 (RTSNASSTSSGSATATSAAATSSSSGTS) shows a compositional bias: low complexity. Ser190 carries GPI-anchor amidated serine lipidation. A propeptide spans 191-218 (SGTSGAIKEVVGLGALSLALGIAGLIIL) (removed in mature form).

It belongs to the X325 family. Cu(2+) serves as cofactor.

It localises to the cell membrane. Functionally, lytic polysaccharide monooxygenase-like protein that has diverged to biological functions other than polysaccharide degradation since it does not perform oxidative cleavage of polysaccharides. Cell surface-bound protein that functions in the copper-accumulation pathway shared by the CUF1-dependent copper transporter CTR1. Involved in maintaining cell wall integrity during copper deficiency. Binds Cu(2+) with an estimated 1:1 stoichiometry and might serve as an extracellular copper ligand. FRE4 and FRE7 metalloreductases probably function together with CTR1 and BIM1 to liberate the Cu(2+) bound to the BIM1 copper-binding site for subsequent import of Cu(+) into the cell by CTR1, via the reduction of BIM1-bound Cu(2+) to Cu(+) to reduce binding affinity for BIM1 but increase affinity for CTR1. Facilitates copper acquisition in the brain of mammalian hosts and acts as a copper-dependent virulence trait in fungal meningitis. While BIM1 plays a critical role in cryptococcal meningitis, at least in part through its role in copper acquisition, it could play additional roles during copper limitation or as a means to invade and colonize host tissues in the brain, by compromising host carbohydrate integrity via its lytic polysaccharide monooxygenase (LPMO) activity, which has still to be determined. This chain is Copper acquisition factor BIM1, found in Cryptococcus neoformans var. neoformans serotype D (strain JEC21 / ATCC MYA-565) (Filobasidiella neoformans).